Consider the following 393-residue polypeptide: 5-azacytidine-induced protein 2 (393 aa).

A homodimerization region spans residues Met-1 to Asp-198. The stretch at Ala-40–Asp-198 forms a coiled coil. The interaction with TBK1 and IKBKE stretch occupies residues Ser-217 to Cys-258. Ser-319 carries the post-translational modification Phosphoserine. 2 disordered regions span residues Thr-321–Tyr-340 and Leu-345–His-393. At Ser-354 the chain carries Phosphoserine. The span at Gln-384–His-393 shows a compositional bias: polar residues.

As to quaternary structure, homodimer. Interacts with IKBKE, TBK1 and TICAM1. Interacts with TAX1BP1. Interacts with CALCOCO2. Ubiquitinated via 'Lys-48'-linked polyubiquitination by TRIM38, leading to its degradation.

It localises to the cytoplasm. In terms of biological role, adapter protein which binds TBK1 and IKBKE playing a role in antiviral innate immunity. Activates serine/threonine-protein kinase TBK1 and facilitates its oligomerization. Enhances the phosphorylation of NF-kappa-B p65 subunit RELA by TBK1. Promotes TBK1-induced as well as TNF-alpha or PMA-induced activation of NF-kappa-B. Participates in IFNB promoter activation via TICAM1. This chain is 5-azacytidine-induced protein 2 (AZI2), found in Bos taurus (Bovine).